We begin with the raw amino-acid sequence, 370 residues long: Galanin receptor type 3 (370 aa).

Residues M1–V20 are Extracellular-facing. N6 carries N-linked (GlcNAc...) asparagine glycosylation. A helical transmembrane segment spans residues P21–V41. The Cytoplasmic segment spans residues L42–T57. A helical transmembrane segment spans residues D58 to F78. The Extracellular segment spans residues Q79–K96. An intrachain disulfide couples C95 to C172. A helical transmembrane segment spans residues T97 to V118. Topologically, residues D119–N138 are cytoplasmic. Residues A139–S159 form a helical membrane-spanning segment. The Extracellular portion of the chain corresponds to Y160 to L184. The helical transmembrane segment at D185–G205 threads the bilayer. Topologically, residues R206–A236 are cytoplasmic. A helical transmembrane segment spans residues M237 to C257. At F258–W259 the chain is on the extracellular side. Residues Y260–A280 form a helical membrane-spanning segment. Residues Y281–Q370 lie on the Cytoplasmic side of the membrane. The S-palmitoyl cysteine moiety is linked to residue C308. Positions Q328–Q370 are disordered. Residues P350–E359 are compositionally biased toward basic and acidic residues.

Belongs to the G-protein coupled receptor 1 family.

The protein localises to the cell membrane. In terms of biological role, receptor for the hormone galanin and spexin-1. In Mus musculus (Mouse), this protein is Galanin receptor type 3 (Galr3).